The primary structure comprises 650 residues: Acetyl-coenzyme A synthetase (650 aa).

CoA is bound by residues 191-194, Thr-311, and Asn-335; that span reads RAGR. ATP is bound by residues 387–389, 411–416, Asp-500, and Arg-515; these read GEP and DTWWQT. Ser-523 contributes to the CoA binding site. Residue Arg-526 coordinates ATP. Mg(2+) contacts are provided by Val-537, His-539, and Val-542. Arg-584 contacts CoA. Lys-609 carries the N6-acetyllysine modification.

Belongs to the ATP-dependent AMP-binding enzyme family. Mg(2+) serves as cofactor. Post-translationally, acetylated. Deacetylation by the SIR2-homolog deacetylase activates the enzyme.

The catalysed reaction is acetate + ATP + CoA = acetyl-CoA + AMP + diphosphate. Its function is as follows. Catalyzes the conversion of acetate into acetyl-CoA (AcCoA), an essential intermediate at the junction of anabolic and catabolic pathways. AcsA undergoes a two-step reaction. In the first half reaction, AcsA combines acetate with ATP to form acetyl-adenylate (AcAMP) intermediate. In the second half reaction, it can then transfer the acetyl group from AcAMP to the sulfhydryl group of CoA, forming the product AcCoA. The protein is Acetyl-coenzyme A synthetase of Shewanella halifaxensis (strain HAW-EB4).